The chain runs to 308 residues: Ribonuclease Z (308 aa).

Positions 61, 63, 65, 66, 139, 210, and 268 each coordinate Zn(2+). The active-site Proton acceptor is the aspartate 65.

It belongs to the RNase Z family. In terms of assembly, homodimer. It depends on Zn(2+) as a cofactor.

It carries out the reaction Endonucleolytic cleavage of RNA, removing extra 3' nucleotides from tRNA precursor, generating 3' termini of tRNAs. A 3'-hydroxy group is left at the tRNA terminus and a 5'-phosphoryl group is left at the trailer molecule.. Its function is as follows. Zinc phosphodiesterase, which displays some tRNA 3'-processing endonuclease activity. Probably involved in tRNA maturation, by removing a 3'-trailer from precursor tRNA. This chain is Ribonuclease Z, found in Natronomonas pharaonis (strain ATCC 35678 / DSM 2160 / CIP 103997 / JCM 8858 / NBRC 14720 / NCIMB 2260 / Gabara) (Halobacterium pharaonis).